Here is a 520-residue protein sequence, read N- to C-terminus: DnaJ homolog l(2)tid, mitochondrial (520 aa).

The N-terminal 62 residues, 1–62, are a transit peptide targeting the mitochondrion; sequence MMISCKKLFV…RRLHTTRDLL (62 aa). Arg-30 bears the Omega-N-methylarginine mark. One can recognise a J domain in the interval 65-130; the sequence is DYYATLGVAK…QKRREYDTYG (66 aa). Lys-106 carries the N6-acetyllysine modification. The CR-type zinc finger occupies 214–292; it reads GVNKDVNVNV…CEGKGRTVQR (79 aa). Cys-227, Cys-230, Cys-244, Cys-247, Cys-266, Cys-269, Cys-280, and Cys-283 together coordinate Zn(2+). The stretch at 227–234 is one CXXCXGXG motif; approximate repeat; that stretch reads CPKCAGTK. Residues 244–251 form a CXXCXGXG motif repeat; the sequence is CQYCNGTG. Residues 266–273 form a CXXCXGXG motif; approximate repeat; sequence CRYCQGTR. Residues 280 to 287 form a CXXCXGXG motif repeat; the sequence is CSECEGKG. The segment at 430–520 is disordered; that stretch reads QIHGIANRKD…FISKIKSMFN (91 aa). Residues 446–476 show a composition bias toward low complexity; that stretch reads AGASEEPGAGAAAKASAAAAGSGASKPGPGA. Positions 479–495 are enriched in basic and acidic residues; the sequence is SEGKDQWTDNKKTKAKE. Residues 496 to 511 show a composition bias toward gly residues; the sequence is GGGSGSGQGDGGGGGF.

As to quaternary structure, interacts with ptc (via C-terminal cytoplasmic region); the interaction is probably direct. Interacts with hh/hedgehog; the interaction is probably mediated by the hedgehog receptor ptc. In terms of processing, appears to produce proteins of differing size. Predicted to have a molecular mass of 56 kDa (TID56) however proteins of 50 kDa, 47 kDa and 40 kDa have been identified and named TID50, TID47 and TID40. TID50 and TID40 localize to the mitochondria while TID47 localizes to the cytoplasm. TID50 is probably TID56 that has undergone mitochondrial transit peptide processing. TID40 and TID47 may be alternately processed proteins or may be isoforms resulting from alternative splicing. Ubiquitously expressed throughout embryonic development. In larvae, expression is seen in sensory organs, gopplet cells, gonads, imaginal disks, proventriculus, fat body, hematopoietic organ, midgut, Malpighian tubules and ring gland.

The protein localises to the cytoplasm. The protein resides in the cytosol. It is found in the mitochondrion. Its subcellular location is the mitochondrion outer membrane. Its function is as follows. Involved in hh/hedgehog signaling. May act as a tumor suppressor in larval imaginal disks. The chain is DnaJ homolog l(2)tid, mitochondrial from Drosophila melanogaster (Fruit fly).